Here is a 423-residue protein sequence, read N- to C-terminus: MFMREIELRGHIIDSLILPKVFDKILDMGGDYKVLEFEIGKRKTDPSYAKILVIGRDERHVDEILNELRDLGAEIPEIEEVELQPAEKDMVLPEGFYSTTNHKTFIRFKGKWIEVENQKMDGAIVVYPDEMRAEVKTIRNIKKGDLVVVGHKGVRVIPPEKPREGGGLFEFMKSDASSEKPKETIIRRIAKEMYEIREKYRKTGKGGIVVVGGPAIIHTGAGWALAKLIRMGYVQALFAGNALATHDIESVLYGTSLGVDLKTGKSVPGGHSHHLRAINTIMRAGSIKDAVEQGILKEGVMYECIKNNIPYVLAGSIRDDGPLPDVITDVVKAQEKMRELLKGKDMVLMLSTMLHSIATGNLLPSWVKTICVDINPAVVTKLMDRGTSQALGIVTDVGVFLPMLVEELEKLEKEKEKSEKREE.

NAD(+)-binding residues include Asn241, Ala242, Asp320, Thr352, Met353, Leu354, His355, Asp373, Asp396, and Val397.

This sequence belongs to the AgrE/ArgZ ornithine cyclodeaminase family. NAD(+) is required as a cofactor.

The catalysed reaction is L-ornithine = L-proline + NH4(+). Functionally, catalyzes the conversion of ornithine to proline, with the release of ammonia. This is Ornithine cyclodeaminase from Methanocaldococcus jannaschii (strain ATCC 43067 / DSM 2661 / JAL-1 / JCM 10045 / NBRC 100440) (Methanococcus jannaschii).